The primary structure comprises 110 residues: Large ribosomal subunit protein uL22 (110 aa).

It belongs to the universal ribosomal protein uL22 family. Part of the 50S ribosomal subunit.

Its function is as follows. This protein binds specifically to 23S rRNA; its binding is stimulated by other ribosomal proteins, e.g. L4, L17, and L20. It is important during the early stages of 50S assembly. It makes multiple contacts with different domains of the 23S rRNA in the assembled 50S subunit and ribosome. In terms of biological role, the globular domain of the protein is located near the polypeptide exit tunnel on the outside of the subunit, while an extended beta-hairpin is found that lines the wall of the exit tunnel in the center of the 70S ribosome. This chain is Large ribosomal subunit protein uL22, found in Vesicomyosocius okutanii subsp. Calyptogena okutanii (strain HA).